We begin with the raw amino-acid sequence, 166 residues long: Lipoprotein signal peptidase (166 aa).

4 helical membrane-spanning segments follow: residues 11 to 31 (VWLW…TLVV), 42 to 62 (LLPV…SFLS), 67 to 87 (WQRW…VWWL), and 90 to 110 (LPAT…GAIG). Active-site residues include D123 and D141. A helical membrane pass occupies residues 133–153 (HFPVFNVADCAICIGAALLLF).

Belongs to the peptidase A8 family.

It localises to the cell inner membrane. The catalysed reaction is Release of signal peptides from bacterial membrane prolipoproteins. Hydrolyzes -Xaa-Yaa-Zaa-|-(S,diacylglyceryl)Cys-, in which Xaa is hydrophobic (preferably Leu), and Yaa (Ala or Ser) and Zaa (Gly or Ala) have small, neutral side chains.. It functions in the pathway protein modification; lipoprotein biosynthesis (signal peptide cleavage). Functionally, this protein specifically catalyzes the removal of signal peptides from prolipoproteins. The chain is Lipoprotein signal peptidase from Pseudoalteromonas translucida (strain TAC 125).